A 122-amino-acid polypeptide reads, in one-letter code: Biogenesis of lysosome-related organelles complex 1 subunit CNL1 (122 aa).

Over residues 1–10 (MQDNSSHSRE) the composition is skewed to basic and acidic residues. The segment at 1-21 (MQDNSSHSRESASAGDDPLGI) is disordered. Residues 63-95 (ENTIDKNIAKFKELLEKCDTLENHYEMLNQLAI) adopt a coiled-coil conformation.

Belongs to the BLOC1S4 family. Component of the biogenesis of lysosome-related organelles complex-1 (BLOC-1) composed of at least BLI1, BLS1, CNL1, KXD1, SNN1 and VAB2.

It localises to the cytoplasm. Its function is as follows. Component of the biogenesis of lysosome-related organelles complex-1 (BLOC-1), a complex that is involved in endosomal cargo sorting. This Saccharomyces cerevisiae (strain RM11-1a) (Baker's yeast) protein is Biogenesis of lysosome-related organelles complex 1 subunit CNL1 (CLN1).